The following is a 241-amino-acid chain: Glutathione S-transferase omega-1 (241 aa).

Ser-2 is modified (N-acetylserine). Positions 22 to 101 constitute a GST N-terminal domain; sequence GQIRVYSMRF…YLDEAYPEKK (80 aa). Cys-32 (nucleophile) is an active-site residue. The residue at position 57 (Lys-57) is an N6-acetyllysine. Glutathione contacts are provided by residues Lys-59, Val-72, and 85 to 86; that span reads ES. The 123-residue stretch at 106 to 228 folds into the GST C-terminal domain; the sequence is DPYEKACQKM…AKTYRDYLSL (123 aa). Ser-129 is subject to Phosphoserine. An N6-acetyllysine mark is found at Lys-143, Lys-148, and Lys-152.

Belongs to the GST superfamily. Omega family. Homodimer.

The protein resides in the cytoplasm. Its subcellular location is the cytosol. The catalysed reaction is RX + glutathione = an S-substituted glutathione + a halide anion + H(+). It catalyses the reaction L-dehydroascorbate + 2 glutathione = glutathione disulfide + L-ascorbate. The enzyme catalyses methylarsonate + 2 glutathione + H(+) = methylarsonous acid + glutathione disulfide + H2O. Exhibits glutathione-dependent thiol transferase and dehydroascorbate reductase activities. Has S-(phenacyl)glutathione reductase activity. Also has glutathione S-transferase activity. Participates in the biotransformation of inorganic arsenic and reduces monomethylarsonic acid (MMA) and dimethylarsonic acid. In Rattus norvegicus (Rat), this protein is Glutathione S-transferase omega-1 (Gsto1).